The sequence spans 272 residues: Anamorsin homolog (272 aa).

The segment at 1–156 (MDSMMNQKTV…KIGSSFALKK (156 aa)) is N-terminal SAM-like domain. Residues 157-185 (PVTNLFKIDLDDDVDLIDEDSLLTEEDLM) are linker. Residues Cys195, Cys202, Cys205, and Cys207 each coordinate [2Fe-2S] cluster. The segment at 195 to 207 (CETTKKACKNCVC) is fe-S binding site A. [4Fe-4S] cluster contacts are provided by Cys233, Cys236, Cys244, and Cys247. 2 consecutive short sequence motifs (cx2C motif) follow at residues 233 to 236 (CGSC) and 244 to 247 (CGTC). The interval 233–247 (CGSCGLGDAFRCGTC) is fe-S binding site B.

This sequence belongs to the anamorsin family. In terms of assembly, monomer. Interacts with ATR3. Requires [2Fe-2S] cluster as cofactor. The cofactor is [4Fe-4S] cluster.

The protein localises to the cytoplasm. Its subcellular location is the mitochondrion intermembrane space. Functionally, component of the cytosolic iron-sulfur (Fe-S) protein assembly (CIA) machinery. Required for the maturation of extramitochondrial Fe-S proteins. Part of an electron transfer chain functioning in an early step of cytosolic Fe-S biogenesis, facilitating the de novo assembly of a [4Fe-4S] cluster on the cytosolic Fe-S scaffold complex. Electrons are transferred from NADPH via FAD- and FMN-containing diflavin oxidoreductase TAH18/ATR3. Together with the diflavin oxidoreductase, also required for the assembly of the diferric tyrosyl radical cofactor of ribonucleotide reductase (RNR), probably by providing electrons for reduction during radical cofactor maturation in the catalytic small subunit. Required for embryo development. This chain is Anamorsin homolog, found in Arabidopsis thaliana (Mouse-ear cress).